A 960-amino-acid chain; its full sequence is Leucine--tRNA ligase (960 aa).

Residues 71-82 (PYPSGAGLHVGH) carry the 'HIGH' region motif. Residues 729–733 (KMGKS) carry the 'KMSKS' region motif. Lysine 732 contacts ATP.

This sequence belongs to the class-I aminoacyl-tRNA synthetase family.

It localises to the cytoplasm. It catalyses the reaction tRNA(Leu) + L-leucine + ATP = L-leucyl-tRNA(Leu) + AMP + diphosphate. The chain is Leucine--tRNA ligase from Corynebacterium diphtheriae (strain ATCC 700971 / NCTC 13129 / Biotype gravis).